We begin with the raw amino-acid sequence, 181 residues long: UPF0232 protein MAP_0004 (181 aa).

A compositionally biased stretch (polar residues) spans 1–11 (MSDDQSPSPSG). 2 disordered regions span residues 1-70 (MSDD…PQPL) and 161-181 (APSWRKGPRHIAGRGPRDTYG). The segment covering 18-39 (LVRRTLEEARAAARAQGKDAGR) has biased composition (basic and acidic residues). Residues 40-50 (GRAAAPTPRRV) show a composition bias toward low complexity.

This sequence belongs to the UPF0232 family.

This chain is UPF0232 protein MAP_0004, found in Mycolicibacterium paratuberculosis (strain ATCC BAA-968 / K-10) (Mycobacterium paratuberculosis).